The primary structure comprises 254 residues: Isoprenyl transferase (254 aa).

Aspartate 12 is a catalytic residue. Residue aspartate 12 coordinates Mg(2+). Residues 13–16, tryptophan 17, arginine 25, histidine 29, and 57–59 each bind substrate; these read GNGR and SSE. Asparagine 60 (proton acceptor) is an active-site residue. Substrate contacts are provided by residues tryptophan 61, arginine 63, arginine 180, and 186 to 188; that span reads RLS. Glutamate 199 lines the Mg(2+) pocket.

This sequence belongs to the UPP synthase family. Homodimer. Mg(2+) is required as a cofactor.

In terms of biological role, catalyzes the condensation of isopentenyl diphosphate (IPP) with allylic pyrophosphates generating different type of terpenoids. This Brucella abortus biovar 1 (strain 9-941) protein is Isoprenyl transferase.